A 630-amino-acid polypeptide reads, in one-letter code: Pentatricopeptide repeat-containing protein At1g63130, mitochondrial (630 aa).

The transit peptide at 1–22 (MRRLFAISSTGNRFVHRSLLGK) directs the protein to the mitochondrion. 15 PPR repeats span residues 80 to 114 (SIVEFSKLLSAIAKMNKFDLVISLGEQMQNLGISH), 115 to 149 (NLYTYSILINCFCRRSQLSLALAVLAKMMKLGYEP), 150 to 184 (DIVTLNSLLNGFCHGNRISDAVSLVGQMVEMGYQP), 185 to 219 (DSFTFNTLIHGLFRHNRASEAVALVDRMVVKGCQP), 220 to 254 (DLVTYGIVVNGLCKRGDIDLALSLLKKMEQGKIEP), 255 to 289 (GVVIYNTIIDALCNYKNVNDALNLFTEMDNKGIRP), 290 to 324 (NVVTYNSLIRCLCNYGRWSDASRLLSDMIERKINP), 325 to 359 (NVVTFSALIDAFVKEGKLVEAEKLYDEMIKRSIDP), 360 to 394 (DIFTYSSLINGFCMHDRLDEAKHMFELMISKDCFP), 395 to 429 (NVVTYNTLIKGFCKAKRVDEGMELFREMSQRGLVG), 430 to 464 (NTVTYTTLIHGFFQARECDNAQIVFKQMVSDGVLP), 465 to 499 (DIMTYSILLDGLCNNGKVETALVVFEYLQRSKMEP), 500 to 534 (DIYTYNIMIEGMCKAGKVEDGWDLFCSLSLKGVKP), 535 to 569 (NVVTYTTMMSGFCRKGLKEEADALFREMKEEGPLP), and 570 to 604 (DSGTYNTLIRAHLRDGDKAASAELIREMRSCRFVG).

The protein belongs to the PPR family. P subfamily.

It localises to the mitochondrion. The chain is Pentatricopeptide repeat-containing protein At1g63130, mitochondrial from Arabidopsis thaliana (Mouse-ear cress).